The following is a 556-amino-acid chain: Genetic interactor of prohibitins 3, mitochondrial (556 aa).

The N-terminal 21 residues, M1–K21, are a transit peptide targeting the mitochondrion. The 193-residue stretch at E113–S305 folds into the CP-type G domain.

This sequence belongs to the TRAFAC class YlqF/YawG GTPase family. GEP3 subfamily.

Its subcellular location is the mitochondrion. Functionally, interacts genetically with prohibitins and thus may be involved in the mitochondrial lipid metabolism. This is Genetic interactor of prohibitins 3, mitochondrial (GEP3) from Saccharomyces cerevisiae (strain JAY291) (Baker's yeast).